Consider the following 183-residue polypeptide: Ubiquitin-conjugating enzyme E2-21 kDa (183 aa).

The UBC core domain occupies 17–179 (TCMSRIVKEY…VKYFLAERER (163 aa)). Cysteine 115 functions as the Glycyl thioester intermediate in the catalytic mechanism.

It belongs to the ubiquitin-conjugating enzyme family.

The protein resides in the peroxisome. The catalysed reaction is S-ubiquitinyl-[E1 ubiquitin-activating enzyme]-L-cysteine + [E2 ubiquitin-conjugating enzyme]-L-cysteine = [E1 ubiquitin-activating enzyme]-L-cysteine + S-ubiquitinyl-[E2 ubiquitin-conjugating enzyme]-L-cysteine.. Its pathway is protein modification; protein ubiquitination. Catalyzes the covalent attachment of ubiquitin to other proteins. Essential for peroxisome biogenesis. Required for UBC4-independent ubiquitination of PEX5. This chain is Ubiquitin-conjugating enzyme E2-21 kDa (PEX4), found in Saccharomyces cerevisiae (strain ATCC 204508 / S288c) (Baker's yeast).